The primary structure comprises 199 residues: Chaperone protein TorD (199 aa).

Belongs to the TorD/DmsD family. TorD subfamily.

It localises to the cytoplasm. Its function is as follows. Involved in the biogenesis of TorA. Acts on TorA before the insertion of the molybdenum cofactor and, as a result, probably favors a conformation of the apoenzyme that is competent for acquiring the cofactor. In Escherichia coli (strain K12 / MC4100 / BW2952), this protein is Chaperone protein TorD.